A 412-amino-acid polypeptide reads, in one-letter code: Cytochrome P450-SOY (412 aa).

A compositionally biased stretch (polar residues) spans 1–25; the sequence is MTESTTDPARQNLDPTSPAPATSFP. A disordered region spans residues 1 to 38; sequence MTESTTDPARQNLDPTSPAPATSFPQDRGCPYHPPAGY. Cysteine 361 serves as a coordination point for heme.

The protein belongs to the cytochrome P450 family. The cofactor is heme.

The protein resides in the cytoplasm. This is Cytochrome P450-SOY (cyp105D1) from Streptomyces griseus.